A 377-amino-acid chain; its full sequence is 3-dehydroquinate synthase (377 aa).

Residues 115–119, 139–140, K152, and K161 each bind NAD(+); these read GVIGD and TS. Zn(2+)-binding residues include E194, H256, and H275.

It belongs to the sugar phosphate cyclases superfamily. Dehydroquinate synthase family. NAD(+) serves as cofactor. Requires Co(2+) as cofactor. It depends on Zn(2+) as a cofactor.

It is found in the cytoplasm. The catalysed reaction is 7-phospho-2-dehydro-3-deoxy-D-arabino-heptonate = 3-dehydroquinate + phosphate. It participates in metabolic intermediate biosynthesis; chorismate biosynthesis; chorismate from D-erythrose 4-phosphate and phosphoenolpyruvate: step 2/7. In terms of biological role, catalyzes the conversion of 3-deoxy-D-arabino-heptulosonate 7-phosphate (DAHP) to dehydroquinate (DHQ). This chain is 3-dehydroquinate synthase, found in Rhizobium meliloti (strain 1021) (Ensifer meliloti).